We begin with the raw amino-acid sequence, 482 residues long: uncharacterized protein (482 aa).

Positions Phe-231–Asp-459 constitute an AB hydrolase-1 domain.

This is an uncharacterized protein from Caenorhabditis elegans.